Consider the following 120-residue polypeptide: MNDFISSLNNWQALYALSNTMLSLANSGQWDELIEQEVKYVTLVEAIARNPIEPDNSVFQEKARELLTKVLANEAALKIKLQARMEELRVLIEQNGNQKSLVSAYGKLSGNVLMPNDFNQ.

The interval 1 to 50 is required for homodimerization; that stretch reads MNDFISSLNNWQALYALSNTMLSLANSGQWDELIEQEVKYVTLVEAIARN. Residues 59–97 form a fliD binding region; it reads FQEKARELLTKVLANEAALKIKLQARMEELRVLIEQNGN.

The protein belongs to the FliT family. As to quaternary structure, homodimer. Interacts with FliD and FlhC.

Its subcellular location is the cytoplasm. The protein localises to the cytosol. Dual-function protein that regulates the transcription of class 2 flagellar operons and that also acts as an export chaperone for the filament-capping protein FliD. As a transcriptional regulator, acts as an anti-FlhDC factor; it directly binds FlhC, thus inhibiting the binding of the FlhC/FlhD complex to class 2 promoters, resulting in decreased expression of class 2 flagellar operons. As a chaperone, effects FliD transition to the membrane by preventing its premature polymerization, and by directing it to the export apparatus. This is Flagellar protein FliT from Cronobacter sakazakii (strain ATCC BAA-894) (Enterobacter sakazakii).